A 169-amino-acid polypeptide reads, in one-letter code: NAD(P)H-quinone oxidoreductase subunit J, chloroplastic (169 aa).

It belongs to the complex I 30 kDa subunit family. In terms of assembly, NDH is composed of at least 16 different subunits, 5 of which are encoded in the nucleus.

It is found in the plastid. Its subcellular location is the chloroplast thylakoid membrane. The catalysed reaction is a plastoquinone + NADH + (n+1) H(+)(in) = a plastoquinol + NAD(+) + n H(+)(out). It carries out the reaction a plastoquinone + NADPH + (n+1) H(+)(in) = a plastoquinol + NADP(+) + n H(+)(out). Functionally, NDH shuttles electrons from NAD(P)H:plastoquinone, via FMN and iron-sulfur (Fe-S) centers, to quinones in the photosynthetic chain and possibly in a chloroplast respiratory chain. The immediate electron acceptor for the enzyme in this species is believed to be plastoquinone. Couples the redox reaction to proton translocation, and thus conserves the redox energy in a proton gradient. This is NAD(P)H-quinone oxidoreductase subunit J, chloroplastic from Anthoceros angustus (Hornwort).